Here is a 271-residue protein sequence, read N- to C-terminus: Sorting nexin-11 (271 aa).

Residues 16–132 (VITVRVQDPR…HLFLQSQLSV (117 aa)) form the PX domain. A 1,2-diacyl-sn-glycero-3-phospho-(1D-myo-inositol-3-phosphate) is bound by residues arginine 59, lysine 85, and arginine 99. The interval 135–139 (IEACV) is important for membrane trafficking. Residues 185–271 (PRSGRRSSPS…PTQLDTAWDK (87 aa)) form a disordered region. Residues 213–230 (SEGPSSESPTLLPSSSLP) show a composition bias toward low complexity.

This sequence belongs to the sorting nexin family. As to quaternary structure, monomer. Interacts with TRPV3; this interaction promotes TRPV3 trafficking from the cell membrane to lysosome for degradation.

It is found in the cell membrane. It localises to the endosome. The protein resides in the cytoplasm. Functionally, phosphoinositide-binding protein involved in protein sorting and membrane trafficking in endosomes. Regulates the levels of TRPV3 by promoting its trafficking from the cell membrane to lysosome for degradation. In Mus musculus (Mouse), this protein is Sorting nexin-11 (Snx11).